The chain runs to 133 residues: Exosome complex protein C1739.07 (133 aa).

The tract at residues 96–133 (VNPKTEAVNTSNAAISSSSSNRPKVAKDAATRIIKHHT) is disordered. The segment covering 102-116 (AVNTSNAAISSSSSN) has biased composition (low complexity).

It belongs to the C1D family. In terms of assembly, component of the exosome multienzyme ribonuclease complex. Interacts with cut3.

It is found in the cytoplasm. Its subcellular location is the nucleus. In terms of biological role, required for exosome-dependent processing of pre-rRNA and small nucleolar RNA (snRNA) precursors. Involved in processing of 35S pre-rRNA at the A0, A1 and A2 sites. This chain is Exosome complex protein C1739.07, found in Schizosaccharomyces pombe (strain 972 / ATCC 24843) (Fission yeast).